The primary structure comprises 305 residues: rRNA 2'-O-methyltransferase fibrillarin (305 aa).

Residues 1–70 form a disordered region; sequence MAYTPGSRGG…SGGRGGAKGG (70 aa). A compositionally biased stretch (gly residues) spans 7–69; it reads SRGGRGGSRG…SSGGRGGAKG (63 aa). Phosphoserine is present on residues Ser-111 and Ser-114. Residues 160–161, 179–180, 204–205, and 224–227 each bind S-adenosyl-L-methionine; these read TS, EF, DA, and DVAQ.

This sequence belongs to the methyltransferase superfamily. Fibrillarin family. In terms of assembly, component of box C/D small nucleolar ribonucleoprotein (snoRNP) particles. By homology to other fibrillarins, some or all of the N-terminal domain arginines are modified to asymmetric dimethylarginine (DMA).

The protein resides in the nucleus. It is found in the nucleolus. It carries out the reaction L-glutaminyl-[histone H2A] + S-adenosyl-L-methionine = N(5)-methyl-L-glutaminyl-[histone H2A] + S-adenosyl-L-homocysteine + H(+). Functionally, S-adenosyl-L-methionine-dependent methyltransferase that has the ability to methylate both RNAs and proteins. Involved in pre-rRNA processing by catalyzing the site-specific 2'-hydroxyl methylation of ribose moieties in pre-ribosomal RNA. Site specificity is provided by a guide RNA that base pairs with the substrate. Methylation occurs at a characteristic distance from the sequence involved in base pairing with the guide RNA. Also acts as a protein methyltransferase by mediating methylation of 'Gln-105' of histone H2A (H2AQ105me), a modification that impairs binding of the FACT complex and is specifically present at 35S ribosomal DNA locus. The sequence is that of rRNA 2'-O-methyltransferase fibrillarin (fib1) from Schizosaccharomyces pombe (strain 972 / ATCC 24843) (Fission yeast).